Reading from the N-terminus, the 186-residue chain is MADEQQTLDQQTPEQPTGAAEDLTARVQELEEQLAAAQDQALRMVADLQNVRRRAEQDVEKAHKFALEKFAGDLLAVVDTLERGLEMSDPNDEAIKPMREGMELTLKMFDDTLRRYQVEALNPEGEPFNPEQYQAMAMQESASAEPGSVLKVFQKGYLLNGRLLRPAMVVVSKAPAETPPSIDEQA.

A compositionally biased stretch (polar residues) spans M1–Q15. The disordered stretch occupies residues M1–A20.

Belongs to the GrpE family. As to quaternary structure, homodimer.

Its subcellular location is the cytoplasm. Participates actively in the response to hyperosmotic and heat shock by preventing the aggregation of stress-denatured proteins, in association with DnaK and GrpE. It is the nucleotide exchange factor for DnaK and may function as a thermosensor. Unfolded proteins bind initially to DnaJ; upon interaction with the DnaJ-bound protein, DnaK hydrolyzes its bound ATP, resulting in the formation of a stable complex. GrpE releases ADP from DnaK; ATP binding to DnaK triggers the release of the substrate protein, thus completing the reaction cycle. Several rounds of ATP-dependent interactions between DnaJ, DnaK and GrpE are required for fully efficient folding. This chain is Protein GrpE, found in Pseudomonas aeruginosa (strain LESB58).